Reading from the N-terminus, the 436-residue chain is 3-phosphoshikimate 1-carboxyvinyltransferase (436 aa).

The 3-phosphoshikimate site is built by K23, S24, and R28. Phosphoenolpyruvate is bound at residue K23. Positions 97 and 126 each coordinate phosphoenolpyruvate. Residues S171, Q173, D323, and K350 each contribute to the 3-phosphoshikimate site. A phosphoenolpyruvate-binding site is contributed by Q173. The Proton acceptor role is filled by D323. The phosphoenolpyruvate site is built by R354 and R396.

The protein belongs to the EPSP synthase family. In terms of assembly, monomer.

It localises to the cytoplasm. The enzyme catalyses 3-phosphoshikimate + phosphoenolpyruvate = 5-O-(1-carboxyvinyl)-3-phosphoshikimate + phosphate. It participates in metabolic intermediate biosynthesis; chorismate biosynthesis; chorismate from D-erythrose 4-phosphate and phosphoenolpyruvate: step 6/7. Functionally, catalyzes the transfer of the enolpyruvyl moiety of phosphoenolpyruvate (PEP) to the 5-hydroxyl of shikimate-3-phosphate (S3P) to produce enolpyruvyl shikimate-3-phosphate and inorganic phosphate. This is 3-phosphoshikimate 1-carboxyvinyltransferase from Prochlorococcus marinus (strain MIT 9301).